The primary structure comprises 215 residues: Adenylate kinase (215 aa).

10–15 (GAGKGT) lines the ATP pocket. Positions 30–59 (STGDMLRAAIKAGTPLGLEAKKIIDEGGLV) are NMP. AMP contacts are provided by residues Thr-31, Arg-36, 57-59 (GLV), 85-88 (GFPR), and Gln-92. Positions 122–159 (GRRVHLASGRTYHVTYNPPKVEGKDDVTGEDLIQRDDD) are LID. ATP-binding positions include Arg-123 and 132-133 (TY). AMP is bound by residues Arg-156 and Arg-167. Gln-200 lines the ATP pocket.

The protein belongs to the adenylate kinase family. Monomer.

The protein resides in the cytoplasm. It catalyses the reaction AMP + ATP = 2 ADP. It functions in the pathway purine metabolism; AMP biosynthesis via salvage pathway; AMP from ADP: step 1/1. Functionally, catalyzes the reversible transfer of the terminal phosphate group between ATP and AMP. Plays an important role in cellular energy homeostasis and in adenine nucleotide metabolism. In Neisseria meningitidis serogroup B (strain ATCC BAA-335 / MC58), this protein is Adenylate kinase.